Here is a 251-residue protein sequence, read N- to C-terminus: MIKVIICGALGRMGTMIANMVIENPELEFVGGVDIRDGTVLGKPVVPSEKLAAFIDEVKPDVMIDFTVAAATMINAKIAAKKGVALVIGTTGFTPEQDAELLDAIKNVPVVKTTNFSVGVNIFWELVRDAASRLGDYDIEVIEAHHRYKKDAPSGTAKTILKVIQEEVGKREEMYGREGMTERKNEIGVHVIRGGDVVGDHTVQFHQNYETIELTHRAYDRAVFARGAIRAAAWVPKAKPGVYTMKEVLGL.

8–13 (GALGRM) serves as a coordination point for NAD(+). Residue Arg36 participates in NADP(+) binding. NAD(+) is bound by residues 89 to 91 (GTT) and 113 to 116 (TTNF). His145 acts as the Proton donor/acceptor in catalysis. Position 146 (His146) interacts with (S)-2,3,4,5-tetrahydrodipicolinate. The active-site Proton donor is the Lys149. 155–156 (GT) contributes to the (S)-2,3,4,5-tetrahydrodipicolinate binding site.

It belongs to the DapB family.

Its subcellular location is the cytoplasm. It catalyses the reaction (S)-2,3,4,5-tetrahydrodipicolinate + NAD(+) + H2O = (2S,4S)-4-hydroxy-2,3,4,5-tetrahydrodipicolinate + NADH + H(+). The enzyme catalyses (S)-2,3,4,5-tetrahydrodipicolinate + NADP(+) + H2O = (2S,4S)-4-hydroxy-2,3,4,5-tetrahydrodipicolinate + NADPH + H(+). The protein operates within amino-acid biosynthesis; L-lysine biosynthesis via DAP pathway; (S)-tetrahydrodipicolinate from L-aspartate: step 4/4. In terms of biological role, catalyzes the conversion of 4-hydroxy-tetrahydrodipicolinate (HTPA) to tetrahydrodipicolinate. The polypeptide is 4-hydroxy-tetrahydrodipicolinate reductase (Methanocorpusculum labreanum (strain ATCC 43576 / DSM 4855 / Z)).